A 230-amino-acid chain; its full sequence is Response regulator MprA (230 aa).

The Response regulatory domain occupies 4 to 118 (RILVVDDDRA…ELLARMRALL (115 aa)). Aspartate 48 is subject to 4-aspartylphosphate. Positions 129–227 (SMAMRFSDLT…VRGVGYVLRE (99 aa)) form a DNA-binding region, ompR/PhoB-type.

In terms of assembly, monomer. Interaction with each conserved 8-bp repeat requires tandem binding by two protein monomers. Post-translationally, phosphorylated and dephosphorylated by MprB.

It localises to the cytoplasm. In terms of biological role, member of the two-component regulatory system MprB/MprA which contributes to maintaining a balance among several systems involved in stress resistance and is required for establishment and maintenance of persistent infection in the host. Functions as a transcriptional regulator that recognizes a 19-bp nucleotide motif comprizing two loosely conserved 8-bp direct DNA-binding motif repeats separated by a 3-bp spacer region. MprB/MprA up-regulates expression of mprA and pepD. The sequence is that of Response regulator MprA (mprA) from Mycobacterium bovis (strain ATCC BAA-935 / AF2122/97).